The sequence spans 761 residues: Neurotrypsin (761 aa).

A signal peptide spans 1 to 21 (MALARCVLAVILGALSVVARA). A disordered region spans residues 25–87 (SRSPLHRPHP…PPTIPRRCGA (63 aa)). Residues 38 to 48 (RSQHAHYLPSS) are compositionally biased toward low complexity. The region spanning 85 to 157 (CGAGESWGNA…GKVDWGYCDC (73 aa)) is the Kringle domain. Disulfide bonds link Cys85/Cys157, Cys101/Cys141, Cys130/Cys155, Cys191/Cys255, Cys204/Cys265, Cys235/Cys245, Cys298/Cys361, Cys311/Cys371, Cys341/Cys351, Cys411/Cys475, Cys424/Cys485, Cys455/Cys465, Cys505/Cys636, Cys547/Cys563, Cys651/Cys717, Cys680/Cys694, and Cys707/Cys736. N-linked (GlcNAc...) asparagine glycosylation occurs at Asn93. 3 SRCR domains span residues 166–267 (IRLV…SCVP), 273–373 (IRLA…TCYP), and 386–487 (IRLV…ICDY). The segment at 505-516 (CGLRLLHRRQKR) is zymogen activation region. Residues 517–760 (IIGGNNSLRG…FVPWIKSVTS (244 aa)) enclose the Peptidase S1 domain. Residue Asn521 is glycosylated (N-linked (GlcNAc...) asparagine). The Charge relay system role is filled by His562. Asn569 is a glycosylation site (N-linked (GlcNAc...) asparagine). Asp612 serves as the catalytic Charge relay system. The active-site Charge relay system is the Ser711.

Belongs to the peptidase S1 family. As to expression, most abundant in cerebral cortex, hippocampus and amygdala.

It localises to the secreted. In terms of biological role, plays a role in neuronal plasticity and the proteolytic action may subserve structural reorganizations associated with learning and memory operations. This is Neurotrypsin (Prss12) from Mus musculus (Mouse).